Consider the following 852-residue polypeptide: Pentatricopeptide repeat-containing protein At5g02830, chloroplastic (852 aa).

Residues 1 to 25 (MRDFVIVFGSSSAITNPHHHHRRCY) constitute a chloroplast transit peptide. Positions 17–60 (PHHHHRRCYATAPESNRKTKSNSSFTKLLPSLPQQHSPSPASVS) are disordered. The span at 44-58 (LLPSLPQQHSPSPAS) shows a compositional bias: low complexity. PPR repeat units lie at residues 334–364 (DMTSYNILLKTCCLAGRVDLAQDIYKEAKRM), 373–407 (DAFTYCTIIKVFADAKMWKWALKVKDDMKSVGVTP), 408–442 (NTHTWSSLISACANAGLVEQANHLFEEMLASGCEP), 443–477 (NSQCFNILLHACVEACQYDRAFRLFQSWKGSSVNE), 525–557 (TTATYNILLKACGTDYYRGKELMDEMKSLGLSP), 558–592 (NQITWSTLIDMCGGSGDVEGAVRILRTMHSAGTRP), 593–627 (DVVAYTTAIKICAENKCLKLAFSLFEEMRRYQIKP), and 628–665 (NWVTYNTLLKARSKYGSLLEVRQCLAIYQDMRNAGYKP).

Belongs to the PPR family. P subfamily.

It localises to the plastid. The protein localises to the chloroplast. The sequence is that of Pentatricopeptide repeat-containing protein At5g02830, chloroplastic from Arabidopsis thaliana (Mouse-ear cress).